The chain runs to 388 residues: NADPH-dependent butanol dehydrogenase (388 aa).

The protein belongs to the iron-containing alcohol dehydrogenase family.

This enzyme has activity using butanol and ethanol as substrates. The protein is NADPH-dependent butanol dehydrogenase (adh1) of Clostridium saccharobutylicum.